We begin with the raw amino-acid sequence, 482 residues long: Methylenetetrahydrofolate--tRNA-(uracil-5-)-methyltransferase TrmFO (482 aa).

Residue 11–16 (GAGLAG) participates in FAD binding.

Belongs to the MnmG family. TrmFO subfamily. FAD serves as cofactor.

It is found in the cytoplasm. It carries out the reaction uridine(54) in tRNA + (6R)-5,10-methylene-5,6,7,8-tetrahydrofolate + NADH + H(+) = 5-methyluridine(54) in tRNA + (6S)-5,6,7,8-tetrahydrofolate + NAD(+). The catalysed reaction is uridine(54) in tRNA + (6R)-5,10-methylene-5,6,7,8-tetrahydrofolate + NADPH + H(+) = 5-methyluridine(54) in tRNA + (6S)-5,6,7,8-tetrahydrofolate + NADP(+). In terms of biological role, catalyzes the folate-dependent formation of 5-methyl-uridine at position 54 (M-5-U54) in all tRNAs. This is Methylenetetrahydrofolate--tRNA-(uracil-5-)-methyltransferase TrmFO from Nitratidesulfovibrio vulgaris (strain DP4) (Desulfovibrio vulgaris).